The chain runs to 224 residues: Ribulose-phosphate 3-epimerase (224 aa).

Ser8 is a binding site for substrate. A divalent metal cation-binding residues include His31, Asp33, and His64. The Proton acceptor role is filled by Asp33. Substrate is bound by residues His64, 140–143, 173–175, and 195–196; these read GFGG, DGG, and GS. An a divalent metal cation-binding site is contributed by Asp173. Asp173 serves as the catalytic Proton donor.

This sequence belongs to the ribulose-phosphate 3-epimerase family. Requires a divalent metal cation as cofactor.

The enzyme catalyses D-ribulose 5-phosphate = D-xylulose 5-phosphate. The protein operates within carbohydrate degradation. Catalyzes the reversible epimerization of D-ribulose 5-phosphate to D-xylulose 5-phosphate. In Mycobacterium leprae (strain TN), this protein is Ribulose-phosphate 3-epimerase.